The sequence spans 311 residues: Methionyl-tRNA formyltransferase (311 aa).

A (6S)-5,6,7,8-tetrahydrofolate-binding site is contributed by 110–113 (SLLP).

Belongs to the Fmt family.

It carries out the reaction L-methionyl-tRNA(fMet) + (6R)-10-formyltetrahydrofolate = N-formyl-L-methionyl-tRNA(fMet) + (6S)-5,6,7,8-tetrahydrofolate + H(+). Attaches a formyl group to the free amino group of methionyl-tRNA(fMet). The formyl group appears to play a dual role in the initiator identity of N-formylmethionyl-tRNA by promoting its recognition by IF2 and preventing the misappropriation of this tRNA by the elongation apparatus. The polypeptide is Methionyl-tRNA formyltransferase (Acidobacterium capsulatum (strain ATCC 51196 / DSM 11244 / BCRC 80197 / JCM 7670 / NBRC 15755 / NCIMB 13165 / 161)).